The primary structure comprises 212 residues: MKLILLIIAAYLLGSIPTGLWIGKYFYGKNLRDYGSGNMGTTNTFRVLGPKAGLLTFTVDFLKGTLATLLPMWLGVTHISPLLFGFFAILGHTFPIFANFKGGKAVATSAGILLGFAPFYLIFLLFIFFFTLYLTSMISLSSVIAASIAIITVLIFPALHFLLKDYDFLFVLIVISAGSLIIIRHRENLVRIKNKTESLVPFGLNITKQKTH.

The next 5 helical transmembrane spans lie at 3-23 (LILL…LWIG), 69-89 (LLPM…FFAI), 110-130 (AGIL…IFFF), 143-163 (VIAA…HFLL), and 165-185 (DYDF…IIRH).

This sequence belongs to the PlsY family. In terms of assembly, probably interacts with PlsX.

The protein localises to the cell membrane. The catalysed reaction is an acyl phosphate + sn-glycerol 3-phosphate = a 1-acyl-sn-glycero-3-phosphate + phosphate. Its pathway is lipid metabolism; phospholipid metabolism. Catalyzes the transfer of an acyl group from acyl-phosphate (acyl-PO(4)) to glycerol-3-phosphate (G3P) to form lysophosphatidic acid (LPA). This enzyme utilizes acyl-phosphate as fatty acyl donor, but not acyl-CoA or acyl-ACP. This is Glycerol-3-phosphate acyltransferase from Streptococcus mutans serotype c (strain ATCC 700610 / UA159).